We begin with the raw amino-acid sequence, 474 residues long: Glutathione synthetase (474 aa).

Ala2 bears the N-acetylalanine mark. Position 125 (Arg125) interacts with substrate. ATP is bound at residue Glu144. Mg(2+)-binding residues include Glu144 and Asn146. Substrate is bound by residues 148–151 (ISAS), 214–216 (ERN), Gln220, and 267–270 (RDGY). Residues Lys305, 364–373 (KPQREGGGNN), Tyr375, and 398–401 (MEKI) contribute to the ATP site. Glu368 provides a ligand contact to Mg(2+). Ser415 carries the post-translational modification Phosphoserine. Residue Glu425 participates in ATP binding. Arg450 lines the substrate pocket. ATP contacts are provided by Lys452 and Asp458. 461 to 462 (VA) serves as a coordination point for substrate.

It belongs to the eukaryotic GSH synthase family. Homodimer. It depends on Mg(2+) as a cofactor.

The catalysed reaction is gamma-L-glutamyl-L-cysteine + glycine + ATP = glutathione + ADP + phosphate + H(+). It catalyses the reaction gamma-L-glutamyl-(2S)-2-aminobutanoate + glycine + ATP = ophthalmate + ADP + phosphate + H(+). Its pathway is sulfur metabolism; glutathione biosynthesis; glutathione from L-cysteine and L-glutamate: step 2/2. In terms of biological role, catalyzes the production of glutathione from gamma-glutamylcysteine and glycine in an ATP-dependent manner. Glutathione (gamma-glutamylcysteinylglycine, GSH) is the most abundant intracellular thiol in living aerobic cells and is required for numerous processes including the protection of cells against oxidative damage, amino acid transport, the detoxification of foreign compounds, the maintenance of protein sulfhydryl groups in a reduced state and acts as a cofactor for a number of enzymes. Participates in ophthalmate biosynthesis in hepatocytes. The protein is Glutathione synthetase of Mus musculus (Mouse).